We begin with the raw amino-acid sequence, 234 residues long: tRNA (guanine-N(1)-)-methyltransferase (234 aa).

Residues G110 and 134 to 139 (IGDYVL) contribute to the S-adenosyl-L-methionine site.

It belongs to the RNA methyltransferase TrmD family. As to quaternary structure, homodimer.

Its subcellular location is the cytoplasm. It catalyses the reaction guanosine(37) in tRNA + S-adenosyl-L-methionine = N(1)-methylguanosine(37) in tRNA + S-adenosyl-L-homocysteine + H(+). Functionally, specifically methylates guanosine-37 in various tRNAs. The sequence is that of tRNA (guanine-N(1)-)-methyltransferase from Tropheryma whipplei (strain Twist) (Whipple's bacillus).